We begin with the raw amino-acid sequence, 430 residues long: Lipoyl synthase, mitochondrial (430 aa).

A mitochondrion-targeting transit peptide spans 1-37 (MAASTGKLRTLFSAHSSLSARPSSALPALRLTILRSY). Residues 40-56 (TTPPDSSISDPSNSSTT) show a composition bias toward low complexity. The disordered stretch occupies residues 40–63 (TTPPDSSISDPSNSSTTVKRPPTA). The [4Fe-4S] cluster site is built by C141, C146, C152, C172, C176, C179, and S387. The 222-residue stretch at 155–376 (GSSKSAATAT…KERALEMGFL (222 aa)) folds into the Radical SAM core domain.

The protein belongs to the radical SAM superfamily. Lipoyl synthase family. It depends on [4Fe-4S] cluster as a cofactor.

It localises to the mitochondrion. It catalyses the reaction [[Fe-S] cluster scaffold protein carrying a second [4Fe-4S](2+) cluster] + N(6)-octanoyl-L-lysyl-[protein] + 2 oxidized [2Fe-2S]-[ferredoxin] + 2 S-adenosyl-L-methionine + 4 H(+) = [[Fe-S] cluster scaffold protein] + N(6)-[(R)-dihydrolipoyl]-L-lysyl-[protein] + 4 Fe(3+) + 2 hydrogen sulfide + 2 5'-deoxyadenosine + 2 L-methionine + 2 reduced [2Fe-2S]-[ferredoxin]. It participates in protein modification; protein lipoylation via endogenous pathway; protein N(6)-(lipoyl)lysine from octanoyl-[acyl-carrier-protein]: step 2/2. Catalyzes the radical-mediated insertion of two sulfur atoms into the C-6 and C-8 positions of the octanoyl moiety bound to the lipoyl domains of lipoate-dependent enzymes, thereby converting the octanoylated domains into lipoylated derivatives. This is Lipoyl synthase, mitochondrial from Ajellomyces dermatitidis (strain ER-3 / ATCC MYA-2586) (Blastomyces dermatitidis).